Reading from the N-terminus, the 434-residue chain is Serine hydroxymethyltransferase (434 aa).

(6S)-5,6,7,8-tetrahydrofolate-binding positions include L133 and 137–139; that span reads GHL. N6-(pyridoxal phosphate)lysine is present on K242.

It belongs to the SHMT family. Homodimer. Pyridoxal 5'-phosphate is required as a cofactor.

It localises to the cytoplasm. It carries out the reaction (6R)-5,10-methylene-5,6,7,8-tetrahydrofolate + glycine + H2O = (6S)-5,6,7,8-tetrahydrofolate + L-serine. The protein operates within one-carbon metabolism; tetrahydrofolate interconversion. It functions in the pathway amino-acid biosynthesis; glycine biosynthesis; glycine from L-serine: step 1/1. Catalyzes the reversible interconversion of serine and glycine with tetrahydrofolate (THF) serving as the one-carbon carrier. This reaction serves as the major source of one-carbon groups required for the biosynthesis of purines, thymidylate, methionine, and other important biomolecules. Also exhibits THF-independent aldolase activity toward beta-hydroxyamino acids, producing glycine and aldehydes, via a retro-aldol mechanism. In Methylorubrum extorquens (strain CM4 / NCIMB 13688) (Methylobacterium extorquens), this protein is Serine hydroxymethyltransferase.